The sequence spans 137 residues: Protein PsiE homolog (137 aa).

A run of 4 helical transmembrane segments spans residues 15–35, 55–75, 82–102, and 108–128; these read LRITLNLALIMVGFTLVAFLI, YYMTQDILTFFLYFEFIALIV, FHFPLRYFIYIGITAIIRFII, and ATSTLILSGAILLLVAALFLA.

The protein belongs to the PsiE family.

Its subcellular location is the cell membrane. This chain is Protein PsiE homolog, found in Listeria innocua serovar 6a (strain ATCC BAA-680 / CLIP 11262).